Reading from the N-terminus, the 391-residue chain is uncharacterized protein (391 aa).

WD repeat units lie at residues 137–179 and 182–222; these read VNDI…PILA and PLSS…SAEE.

Its subcellular location is the cytoplasm. The protein localises to the nucleus. This is an uncharacterized protein from Schizosaccharomyces pombe (strain 972 / ATCC 24843) (Fission yeast).